The following is a 345-amino-acid chain: Inositol 2-dehydrogenase (345 aa).

This sequence belongs to the Gfo/Idh/MocA family. As to quaternary structure, homotetramer.

It carries out the reaction myo-inositol + NAD(+) = scyllo-inosose + NADH + H(+). Functionally, involved in the oxidation of myo-inositol (MI) to 2-keto-myo-inositol (2KMI or 2-inosose). This chain is Inositol 2-dehydrogenase, found in Mycolicibacterium smegmatis (strain ATCC 700084 / mc(2)155) (Mycobacterium smegmatis).